The following is a 288-amino-acid chain: UDP-3-O-acyl-N-acetylglucosamine deacetylase (288 aa).

The Zn(2+) site is built by His-79, His-236, and Asp-240. Residue His-263 is the Proton donor of the active site.

This sequence belongs to the LpxC family. Zn(2+) serves as cofactor.

It carries out the reaction a UDP-3-O-[(3R)-3-hydroxyacyl]-N-acetyl-alpha-D-glucosamine + H2O = a UDP-3-O-[(3R)-3-hydroxyacyl]-alpha-D-glucosamine + acetate. The protein operates within glycolipid biosynthesis; lipid IV(A) biosynthesis; lipid IV(A) from (3R)-3-hydroxytetradecanoyl-[acyl-carrier-protein] and UDP-N-acetyl-alpha-D-glucosamine: step 2/6. Catalyzes the hydrolysis of UDP-3-O-myristoyl-N-acetylglucosamine to form UDP-3-O-myristoylglucosamine and acetate, the committed step in lipid A biosynthesis. This is UDP-3-O-acyl-N-acetylglucosamine deacetylase from Rickettsia prowazekii (strain Madrid E).